Reading from the N-terminus, the 276-residue chain is Large ribosomal subunit protein uL2 (276 aa).

Residues 225 to 276 are disordered; the sequence is VMNPVDHPHGGGEGKTAAGRDPVSPWGTPTKGYRTRSNKRTDSMIVQKRHKR.

It belongs to the universal ribosomal protein uL2 family. Part of the 50S ribosomal subunit. Forms a bridge to the 30S subunit in the 70S ribosome.

Functionally, one of the primary rRNA binding proteins. Required for association of the 30S and 50S subunits to form the 70S ribosome, for tRNA binding and peptide bond formation. It has been suggested to have peptidyltransferase activity; this is somewhat controversial. Makes several contacts with the 16S rRNA in the 70S ribosome. This chain is Large ribosomal subunit protein uL2, found in Cupriavidus taiwanensis (strain DSM 17343 / BCRC 17206 / CCUG 44338 / CIP 107171 / LMG 19424 / R1) (Ralstonia taiwanensis (strain LMG 19424)).